Consider the following 440-residue polypeptide: Ribulose bisphosphate carboxylase large chain (440 aa).

At lysine 4 the chain carries N6,N6,N6-trimethyllysine. Substrate contacts are provided by asparagine 113 and threonine 163. Lysine 165 serves as the catalytic Proton acceptor. Residue lysine 167 participates in substrate binding. Residues lysine 191, aspartate 193, and glutamate 194 each contribute to the Mg(2+) site. Lysine 191 is modified (N6-carboxylysine). Histidine 284 (proton acceptor) is an active-site residue. Residues arginine 285, histidine 317, and serine 369 each coordinate substrate.

The protein belongs to the RuBisCO large chain family. Type I subfamily. As to quaternary structure, heterohexadecamer of 8 large chains and 8 small chains; disulfide-linked. The disulfide link is formed within the large subunit homodimers. Mg(2+) serves as cofactor. In terms of processing, the disulfide bond which can form in the large chain dimeric partners within the hexadecamer appears to be associated with oxidative stress and protein turnover.

The protein localises to the plastid. The protein resides in the chloroplast. The catalysed reaction is 2 (2R)-3-phosphoglycerate + 2 H(+) = D-ribulose 1,5-bisphosphate + CO2 + H2O. It carries out the reaction D-ribulose 1,5-bisphosphate + O2 = 2-phosphoglycolate + (2R)-3-phosphoglycerate + 2 H(+). Its function is as follows. RuBisCO catalyzes two reactions: the carboxylation of D-ribulose 1,5-bisphosphate, the primary event in carbon dioxide fixation, as well as the oxidative fragmentation of the pentose substrate in the photorespiration process. Both reactions occur simultaneously and in competition at the same active site. This Matteuccia struthiopteris (European ostrich fern) protein is Ribulose bisphosphate carboxylase large chain.